The chain runs to 155 residues: UPF0303 protein lp_3613 (155 aa).

This sequence belongs to the UPF0303 family.

This chain is UPF0303 protein lp_3613, found in Lactiplantibacillus plantarum (strain ATCC BAA-793 / NCIMB 8826 / WCFS1) (Lactobacillus plantarum).